A 203-amino-acid polypeptide reads, in one-letter code: MSRYTGPKWRISRRLGVSLSGTGKELSRRAYAPGDHGAGRRAKISEYGMQLREKQKLRFTYGLTERQFHALFNKAGKIRKGTHGTNFMILLEQRLDSLVYRLGFATTRQQARQLVNHGHIMVDGKRVDIPSYNVTPGQVVSVRDKSKNIVPIQAAVESVVARPQFVSFDAEKLEGSLVRLPEREELDADLNEALIVEYYNRLG.

The region spanning 93–153 is the S4 RNA-binding domain; the sequence is QRLDSLVYRL…DKSKNIVPIQ (61 aa).

It belongs to the universal ribosomal protein uS4 family. In terms of assembly, part of the 30S ribosomal subunit. Contacts protein S5. The interaction surface between S4 and S5 is involved in control of translational fidelity.

One of the primary rRNA binding proteins, it binds directly to 16S rRNA where it nucleates assembly of the body of the 30S subunit. Functionally, with S5 and S12 plays an important role in translational accuracy. This chain is Small ribosomal subunit protein uS4, found in Leuconostoc citreum (strain KM20).